Reading from the N-terminus, the 290-residue chain is ATP synthase gamma chain (290 aa).

Belongs to the ATPase gamma chain family. In terms of assembly, F-type ATPases have 2 components, CF(1) - the catalytic core - and CF(0) - the membrane proton channel. CF(1) has five subunits: alpha(3), beta(3), gamma(1), delta(1), epsilon(1). CF(0) has three main subunits: a, b and c.

Its subcellular location is the cell inner membrane. Its function is as follows. Produces ATP from ADP in the presence of a proton gradient across the membrane. The gamma chain is believed to be important in regulating ATPase activity and the flow of protons through the CF(0) complex. The chain is ATP synthase gamma chain from Gemmatimonas aurantiaca (strain DSM 14586 / JCM 11422 / NBRC 100505 / T-27).